A 275-amino-acid chain; its full sequence is Envelope glycoprotein (275 aa).

3 cysteine pairs are disulfide-bonded: cysteine 1/cysteine 10, cysteine 18/cysteine 27, and cysteine 58/cysteine 62. Residue asparagine 122 is glycosylated (N-linked (GlcNAc...) asparagine; by host). 4 disulfides stabilise this stretch: cysteine 164–cysteine 194, cysteine 187–cysteine 239, cysteine 204–cysteine 209, and cysteine 240–cysteine 245.

The protein belongs to the hantavirus envelope glycoprotein family. Homodimer. Homotetramer; forms heterotetrameric Gn-Gc spikes in the pre-fusion conformation. Homotrimer; forms homotrimer in the post-fusion conformation at acidic pH. Interacts (via C-terminus) with the nucleoprotein. Envelope polyprotein precursor is quickly cleaved in vivo just after synthesis, presumably by host signal peptidase.

The protein localises to the virion membrane. It is found in the host cell surface. It localises to the host Golgi apparatus membrane. The protein resides in the host endoplasmic reticulum membrane. In terms of biological role, forms homotetramers with glycoprotein N at the surface of the virion. Attaches the virion to host cell receptors including integrin ITGAV/ITGB3. This attachment induces virion internalization predominantly through clathrin-dependent endocytosis. Class II fusion protein that promotes fusion of viral membrane with host endosomal membrane after endocytosis of the virion. The protein is Envelope glycoprotein (GP) of Homo sapiens (Human).